Here is a 426-residue protein sequence, read N- to C-terminus: Homeobox protein knotted-1-like LET12 (426 aa).

Disordered stretches follow at residues 1-26 (MEFQ…QQNA), 85-158 (QTSN…ENSW), and 270-290 (GVAP…DQAD). Residues 15 to 24 (QQQQQQQQQQ) show a composition bias toward low complexity. Residues 104-114 (AGGGSNGGGSG) show a composition bias toward gly residues. The span at 139–151 (ENNNNNNNNNNNN) shows a compositional bias: low complexity. The ELK domain maps to 327 to 347 (ELKHELKQGYKEKIVDIREEI). Positions 348–411 (LRKRRAGKLP…NQRKRNWHSN (64 aa)) form a DNA-binding region, homeobox; TALE-type. Positions 406–426 (RNWHSNPSTSSSQKSQTQECR) are disordered. Low complexity predominate over residues 413 to 426 (STSSSQKSQTQECR).

It belongs to the TALE/KNOX homeobox family. As to expression, ubiquitously expressed in the mature plant.

It localises to the nucleus. In terms of biological role, may have a role to play in formative events in ovule and embryo morphogenesis. The chain is Homeobox protein knotted-1-like LET12 (LET12) from Solanum lycopersicum (Tomato).